Here is a 287-residue protein sequence, read N- to C-terminus: Putative glutamate--cysteine ligase regulatory subunit (287 aa).

Belongs to the aldo/keto reductase family. Glutamate--cysteine ligase light chain subfamily. Heterodimer of a catalytic heavy chain and a regulatory light chain.

Its subcellular location is the cytoplasm. The protein operates within sulfur metabolism; glutathione biosynthesis; glutathione from L-cysteine and L-glutamate: step 1/2. This chain is Putative glutamate--cysteine ligase regulatory subunit, found in Schizosaccharomyces pombe (strain 972 / ATCC 24843) (Fission yeast).